We begin with the raw amino-acid sequence, 427 residues long: 3-phosphoshikimate 1-carboxyvinyltransferase (427 aa).

3-phosphoshikimate-binding residues include Lys-20, Ser-21, and Arg-25. A phosphoenolpyruvate-binding site is contributed by Lys-20. Residues Gly-92 and Arg-120 each coordinate phosphoenolpyruvate. 3-phosphoshikimate is bound by residues Ser-166, Gln-168, Asp-312, and Lys-339. Gln-168 is a phosphoenolpyruvate binding site. Asp-312 acts as the Proton acceptor in catalysis. Phosphoenolpyruvate is bound by residues Arg-343 and Arg-385.

This sequence belongs to the EPSP synthase family. Monomer.

It is found in the cytoplasm. The enzyme catalyses 3-phosphoshikimate + phosphoenolpyruvate = 5-O-(1-carboxyvinyl)-3-phosphoshikimate + phosphate. It participates in metabolic intermediate biosynthesis; chorismate biosynthesis; chorismate from D-erythrose 4-phosphate and phosphoenolpyruvate: step 6/7. Its function is as follows. Catalyzes the transfer of the enolpyruvyl moiety of phosphoenolpyruvate (PEP) to the 5-hydroxyl of shikimate-3-phosphate (S3P) to produce enolpyruvyl shikimate-3-phosphate and inorganic phosphate. The polypeptide is 3-phosphoshikimate 1-carboxyvinyltransferase (Streptococcus pyogenes serotype M49 (strain NZ131)).